Reading from the N-terminus, the 456-residue chain is Mitochondrial import inner membrane translocase subunit TIM50 (456 aa).

A mitochondrion-targeting transit peptide spans methionine 1–phenylalanine 22. The Mitochondrial matrix segment spans residues serine 23–arginine 171. Disordered regions lie at residues glutamate 101–glutamate 120 and glutamate 132–arginine 165. Over residues serine 137–proline 153 the composition is skewed to polar residues. Residues isoleucine 172–tyrosine 192 form a helical membrane-spanning segment. Residues glycine 193–alanine 456 lie on the Mitochondrial intermembrane side of the membrane. One can recognise an FCP1 homology domain in the interval tyrosine 247–isoleucine 391.

Belongs to the TIM50 family. As to quaternary structure, component of the TIM23 complex at least composed of tim-23, tim-17 and tim-50.

The protein resides in the mitochondrion inner membrane. In terms of biological role, essential component of the TIM23 complex, a complex that mediates the translocation of transit peptide-containing proteins across the mitochondrial inner membrane. The sequence is that of Mitochondrial import inner membrane translocase subunit TIM50 (scpl-4) from Caenorhabditis briggsae.